A 424-amino-acid chain; its full sequence is Phosphomethylpyrimidine synthase (424 aa).

Substrate is bound by residues M94, Y123, H162, 184–186, 225–228, and E264; these read SRG and NGMR. H268 lines the Zn(2+) pocket. Position 291 (Y291) interacts with substrate. H332 provides a ligand contact to Zn(2+). [4Fe-4S] cluster-binding residues include C406, C409, and C413.

This sequence belongs to the ThiC family. It depends on [4Fe-4S] cluster as a cofactor.

The enzyme catalyses 5-amino-1-(5-phospho-beta-D-ribosyl)imidazole + S-adenosyl-L-methionine = 4-amino-2-methyl-5-(phosphooxymethyl)pyrimidine + CO + 5'-deoxyadenosine + formate + L-methionine + 3 H(+). It functions in the pathway cofactor biosynthesis; thiamine diphosphate biosynthesis. Functionally, catalyzes the synthesis of the hydroxymethylpyrimidine phosphate (HMP-P) moiety of thiamine from aminoimidazole ribotide (AIR) in a radical S-adenosyl-L-methionine (SAM)-dependent reaction. The sequence is that of Phosphomethylpyrimidine synthase from Methanosphaerula palustris (strain ATCC BAA-1556 / DSM 19958 / E1-9c).